Here is a 578-residue protein sequence, read N- to C-terminus: Zinc finger protein with KRAB and SCAN domains 8 (578 aa).

Positions 1-20 are disordered; sequence MAEESRKPSAPSPPDQTPEE. A Phosphoserine modification is found at Ser-12. A Glycyl lysine isopeptide (Lys-Gly) (interchain with G-Cter in SUMO2) cross-link involves residue Lys-26. Positions 51–133 constitute an SCAN box domain; it reads RLRFRQLCYQ…TLLEDLERQI (83 aa). Residues 158 to 205 are disordered; that stretch reads ASAPEPPNTQLQSEATQHKSPVPQESQERAMSTSQSPTRSQKGSSGDQ. The segment covering 165 to 205 has biased composition (polar residues); the sequence is NTQLQSEATQHKSPVPQESQERAMSTSQSPTRSQKGSSGDQ. Residues Lys-176 and Lys-199 each participate in a glycyl lysine isopeptide (Lys-Gly) (interchain with G-Cter in SUMO2) cross-link. Ser-201 is subject to Phosphoserine. One can recognise a KRAB domain in the interval 220-316; that stretch reads EKIEDMAVSL…GRLERQRGNP (97 aa). Residues Lys-221, Lys-272, and Lys-288 each participate in a glycyl lysine isopeptide (Lys-Gly) (interchain with G-Cter in SUMO2) cross-link. 2 C2H2-type zinc fingers span residues 322 to 344 and 350 to 372; these read HKCD…WRIH and YQCN…QDIH. Residues Lys-374 and Lys-376 each participate in a glycyl lysine isopeptide (Lys-Gly) (interchain with G-Cter in SUMO2) cross-link. 7 C2H2-type zinc fingers span residues 378 to 400, 406 to 428, 434 to 456, 462 to 484, 490 to 512, 518 to 540, and 546 to 568; these read YHCK…QRIH, YQCN…QRIH, YECN…QRIH, YECD…QRSH, YKCN…QRIH, and YKCK…LRIH. Residues Lys-413 and Lys-441 each participate in a glycyl lysine isopeptide (Lys-Gly) (interchain with G-Cter in SUMO2) cross-link. Lys-502 is covalently cross-linked (Glycyl lysine isopeptide (Lys-Gly) (interchain with G-Cter in SUMO2)). Residue Lys-572 forms a Glycyl lysine isopeptide (Lys-Gly) (interchain with G-Cter in SUMO2) linkage.

This sequence belongs to the krueppel C2H2-type zinc-finger protein family.

Its subcellular location is the nucleus. May be involved in transcriptional regulation. The sequence is that of Zinc finger protein with KRAB and SCAN domains 8 (ZKSCAN8) from Pan troglodytes (Chimpanzee).